The chain runs to 881 residues: Alanine--tRNA ligase (881 aa).

The Zn(2+) site is built by His564, His568, Cys666, and His670.

This sequence belongs to the class-II aminoacyl-tRNA synthetase family. The cofactor is Zn(2+).

The protein localises to the cytoplasm. It catalyses the reaction tRNA(Ala) + L-alanine + ATP = L-alanyl-tRNA(Ala) + AMP + diphosphate. Functionally, catalyzes the attachment of alanine to tRNA(Ala) in a two-step reaction: alanine is first activated by ATP to form Ala-AMP and then transferred to the acceptor end of tRNA(Ala). Also edits incorrectly charged Ser-tRNA(Ala) and Gly-tRNA(Ala) via its editing domain. The polypeptide is Alanine--tRNA ligase (Caldicellulosiruptor saccharolyticus (strain ATCC 43494 / DSM 8903 / Tp8T 6331)).